The chain runs to 720 residues: Polyribonucleotide nucleotidyltransferase (720 aa).

Residues aspartate 485 and aspartate 491 each contribute to the Mg(2+) site. The 64-residue stretch at 552–615 (PRIHTIKINP…EAIRRIQALT (64 aa)) folds into the KH domain. The region spanning 621–689 (GRIYEGKVTR…RQGRIRLSIK (69 aa)) is the S1 motif domain. Residues 697–720 (PAAESVAESAPAQEAVVEQVPMTE) form a disordered region. Low complexity predominate over residues 698 to 720 (AAESVAESAPAQEAVVEQVPMTE).

Belongs to the polyribonucleotide nucleotidyltransferase family. As to quaternary structure, component of the RNA degradosome, which is a multiprotein complex involved in RNA processing and mRNA degradation. Mg(2+) serves as cofactor.

The protein resides in the cytoplasm. The enzyme catalyses RNA(n+1) + phosphate = RNA(n) + a ribonucleoside 5'-diphosphate. Functionally, involved in mRNA degradation. Catalyzes the phosphorolysis of single-stranded polyribonucleotides processively in the 3'- to 5'-direction. The protein is Polyribonucleotide nucleotidyltransferase of Tolumonas auensis (strain DSM 9187 / NBRC 110442 / TA 4).